The primary structure comprises 447 residues: tRNA-2-methylthio-N(6)-dimethylallyladenosine synthase (447 aa).

The 117-residue stretch at 4-120 folds into the MTTase N-terminal domain; it reads RSFFIKTYGC…INELLERSRT (117 aa). [4Fe-4S] cluster-binding residues include cysteine 13, cysteine 49, cysteine 83, cysteine 161, cysteine 165, and cysteine 168. One can recognise a Radical SAM core domain in the interval 147-382; that stretch reads HEGEFRKFVT…QARQDEIGLE (236 aa). Residues 385–446 form the TRAM domain; the sequence is QEYIGTTQEV…QHSLRGSIVE (62 aa).

It belongs to the methylthiotransferase family. MiaB subfamily. In terms of assembly, monomer. [4Fe-4S] cluster serves as cofactor.

It is found in the cytoplasm. It carries out the reaction N(6)-dimethylallyladenosine(37) in tRNA + (sulfur carrier)-SH + AH2 + 2 S-adenosyl-L-methionine = 2-methylsulfanyl-N(6)-dimethylallyladenosine(37) in tRNA + (sulfur carrier)-H + 5'-deoxyadenosine + L-methionine + A + S-adenosyl-L-homocysteine + 2 H(+). Catalyzes the methylthiolation of N6-(dimethylallyl)adenosine (i(6)A), leading to the formation of 2-methylthio-N6-(dimethylallyl)adenosine (ms(2)i(6)A) at position 37 in tRNAs that read codons beginning with uridine. The chain is tRNA-2-methylthio-N(6)-dimethylallyladenosine synthase from Desulfotalea psychrophila (strain LSv54 / DSM 12343).